The chain runs to 90 residues: Small ribosomal subunit protein uS15 (90 aa).

It belongs to the universal ribosomal protein uS15 family. Part of the 30S ribosomal subunit. Forms a bridge to the 50S subunit in the 70S ribosome, contacting the 23S rRNA.

Functionally, one of the primary rRNA binding proteins, it binds directly to 16S rRNA where it helps nucleate assembly of the platform of the 30S subunit by binding and bridging several RNA helices of the 16S rRNA. In terms of biological role, forms an intersubunit bridge (bridge B4) with the 23S rRNA of the 50S subunit in the ribosome. This Aliarcobacter butzleri (strain RM4018) (Arcobacter butzleri) protein is Small ribosomal subunit protein uS15.